The primary structure comprises 1120 residues: Transcription-repair-coupling factor (1120 aa).

A Helicase ATP-binding domain is found at 591-756; sequence DLTNGMLMDR…MTGLKELSII (166 aa). 604-611 contributes to the ATP binding site; that stretch reads GDVGFGKT. The DEEQ box motif lies at 709-712; it reads DEEQ. The Helicase C-terminal domain maps to 777–933; sequence IIRDALLREH…TIASHDADLR (157 aa).

The protein in the N-terminal section; belongs to the UvrB family. It in the C-terminal section; belongs to the helicase family. RecG subfamily.

It is found in the cytoplasm. Functionally, couples transcription and DNA repair by recognizing RNA polymerase (RNAP) stalled at DNA lesions. Mediates ATP-dependent release of RNAP and its truncated transcript from the DNA, and recruitment of nucleotide excision repair machinery to the damaged site. This chain is Transcription-repair-coupling factor, found in Rickettsia prowazekii (strain Madrid E).